An 813-amino-acid chain; its full sequence is Molybdenum cofactor sulfurase (813 aa).

K228 carries the N6-(pyridoxal phosphate)lysine modification. Residue C391 is part of the active site. The interval 625-670 (PSLRHAKAHMQKHQGPKRSAAIEKSSAHSFHDPPTPPDSDSENRKR) is disordered. Over residues 628 to 640 (RHAKAHMQKHQGP) the composition is skewed to basic residues. The region spanning 648–812 (KSSAHSFHDP…IKVGDKVSIG (165 aa)) is the MOSC domain.

This sequence belongs to the class-V pyridoxal-phosphate-dependent aminotransferase family. MOCOS subfamily. The cofactor is pyridoxal 5'-phosphate.

It carries out the reaction Mo-molybdopterin + L-cysteine + AH2 = thio-Mo-molybdopterin + L-alanine + A + H2O. In terms of biological role, sulfurates the molybdenum cofactor. Sulfation of molybdenum is essential for xanthine dehydrogenase (XDH) and aldehyde oxidase (ADO) enzymes in which molybdenum cofactor is liganded by 1 oxygen and 1 sulfur atom in active form. The sequence is that of Molybdenum cofactor sulfurase from Botryotinia fuckeliana (strain B05.10) (Noble rot fungus).